Consider the following 58-residue polypeptide: Ribosome modulation factor (58 aa).

The interval 1-28 (MKRQKRDRFERAHTQGFKAGLHGRSKDN) is disordered.

The protein belongs to the ribosome modulation factor family.

The protein localises to the cytoplasm. Functionally, during stationary phase, converts 70S ribosomes to an inactive dimeric form (100S ribosomes). The chain is Ribosome modulation factor from Idiomarina loihiensis (strain ATCC BAA-735 / DSM 15497 / L2-TR).